The following is a 239-amino-acid chain: MGRKWNNIKEKKASKDASTSRIYARFGKEIYVAAKQGEPDPESNRALKVVLERAKTYSVPKAIIDRAIDKAKGGSDETFSDLRYEGFGPNGSMIIVDALTNNVNRTAPEVRAAFNKNGGNMGVSGSVAYMFDPTAVFGLEGKSSDEVLEILMEADVDVRDILEEDGAVIVYADAEQFHAVQEALKNGGVSEFTVAELTMLPQNEVTLTEDVQAQFEKLIDALEDLDDVQQVYHNVDLGE.

The protein belongs to the TACO1 family. YeeN subfamily.

It localises to the cytoplasm. In Brevibacillus brevis (strain 47 / JCM 6285 / NBRC 100599), this protein is Probable transcriptional regulatory protein BBR47_14810.